The sequence spans 216 residues: MTSLLIALAAAAGGYLFGSIPFGLVLTRMAGLGDIRAIGSGNIGATNVLRTGRKDLAALTLILDAGKAGIAAAVFGYFLGTTAGLVAGAFAFAGHCFPVWLGFKGGKGVATFVGTMLVVFWPVGLTVIATWLAMAAIFRISSLAALAAALAAPFAALAWGRPDVAIMAGLLTVLIYWLHRANISRLLKGEEPRIGGKKSETSADVSDGDDPDTPAT.

Transmembrane regions (helical) follow at residues 5–25 (LIAL…FGLV), 70–90 (IAAA…AGAF), 118–138 (VVFW…AAIF), 140–160 (ISSL…LAWG), and 164–184 (VAIM…ANIS). Over residues 192 to 201 (PRIGGKKSET) the composition is skewed to basic and acidic residues. Residues 192–216 (PRIGGKKSETSADVSDGDDPDTPAT) form a disordered region. Residues 206 to 216 (SDGDDPDTPAT) show a composition bias toward acidic residues.

The protein belongs to the PlsY family. As to quaternary structure, probably interacts with PlsX.

The protein resides in the cell inner membrane. The enzyme catalyses an acyl phosphate + sn-glycerol 3-phosphate = a 1-acyl-sn-glycero-3-phosphate + phosphate. The protein operates within lipid metabolism; phospholipid metabolism. Catalyzes the transfer of an acyl group from acyl-phosphate (acyl-PO(4)) to glycerol-3-phosphate (G3P) to form lysophosphatidic acid (LPA). This enzyme utilizes acyl-phosphate as fatty acyl donor, but not acyl-CoA or acyl-ACP. The protein is Glycerol-3-phosphate acyltransferase of Maricaulis maris (strain MCS10) (Caulobacter maris).